The following is a 358-amino-acid chain: Methylthioribose-1-phosphate isomerase (358 aa).

Residues 54–56, R96, and Q205 each bind substrate; that span reads RGA. D246 serves as the catalytic Proton donor. 256-257 serves as a coordination point for substrate; the sequence is NK.

The protein belongs to the eIF-2B alpha/beta/delta subunits family. MtnA subfamily.

It catalyses the reaction 5-(methylsulfanyl)-alpha-D-ribose 1-phosphate = 5-(methylsulfanyl)-D-ribulose 1-phosphate. The protein operates within amino-acid biosynthesis; L-methionine biosynthesis via salvage pathway; L-methionine from S-methyl-5-thio-alpha-D-ribose 1-phosphate: step 1/6. In terms of biological role, catalyzes the interconversion of methylthioribose-1-phosphate (MTR-1-P) into methylthioribulose-1-phosphate (MTRu-1-P). In Pseudomonas savastanoi pv. phaseolicola (strain 1448A / Race 6) (Pseudomonas syringae pv. phaseolicola (strain 1448A / Race 6)), this protein is Methylthioribose-1-phosphate isomerase.